Reading from the N-terminus, the 181-residue chain is Large ribosomal subunit protein uL5 (181 aa).

The protein belongs to the universal ribosomal protein uL5 family. As to quaternary structure, part of the 50S ribosomal subunit; part of the 5S rRNA/L5/L18/L25 subcomplex. Contacts the 5S rRNA and the P site tRNA. Forms a bridge to the 30S subunit in the 70S ribosome.

In terms of biological role, this is one of the proteins that bind and probably mediate the attachment of the 5S RNA into the large ribosomal subunit, where it forms part of the central protuberance. In the 70S ribosome it contacts protein S13 of the 30S subunit (bridge B1b), connecting the 2 subunits; this bridge is implicated in subunit movement. Contacts the P site tRNA; the 5S rRNA and some of its associated proteins might help stabilize positioning of ribosome-bound tRNAs. The polypeptide is Large ribosomal subunit protein uL5 (Helicobacter hepaticus (strain ATCC 51449 / 3B1)).